Here is a 125-residue protein sequence, read N- to C-terminus: Glycine cleavage system H protein (125 aa).

The region spanning 22-104 is the Lipoyl-binding domain; the sequence is SYIIGITDFA…YDTGWILKLT (83 aa). Lys-63 carries the N6-lipoyllysine modification.

This sequence belongs to the GcvH family. In terms of assembly, the glycine cleavage system is composed of four proteins: P, T, L and H. Requires (R)-lipoate as cofactor.

Its function is as follows. The glycine cleavage system catalyzes the degradation of glycine. The H protein shuttles the methylamine group of glycine from the P protein to the T protein. Is also involved in protein lipoylation via its role as an octanoyl/lipoyl carrier protein intermediate. The polypeptide is Glycine cleavage system H protein (Listeria welshimeri serovar 6b (strain ATCC 35897 / DSM 20650 / CCUG 15529 / CIP 8149 / NCTC 11857 / SLCC 5334 / V8)).